Here is a 455-residue protein sequence, read N- to C-terminus: Immunoglobulin alpha-2 heavy chain (455 aa).

4 consecutive Ig-like domains span residues 1–95, 121–213, 227–322, and 330–432; these read EVQL…VYYC, PKVF…QDVT, PRLS…ANIT, and PEVH…KTID. Positions 1 to 115 are variable (V) domain, involved in antigen recognition; the sequence is EVQLVETGGG…GKGTTVTVSS (115 aa). Cystine bridges form between cysteine 22–cysteine 95 and cysteine 141–cysteine 200. Positions 116-455 are constant (C) domain; that stretch reads ASPTSPKVFP…VMAEADGTCY (340 aa). 3 N-linked (GlcNAc...) asparagine glycosylation sites follow: asparagine 162, asparagine 207, and asparagine 246. 2 disulfide bridges follow: cysteine 225/cysteine 282 and cysteine 249/cysteine 306. The N-linked (GlcNAc...) asparagine glycan is linked to asparagine 320. A disulfide bridge connects residues cysteine 352 and cysteine 415. A glycan (N-linked (GlcNAc...) asparagine) is linked at asparagine 442.

Immunoglobulins are composed of two identical heavy chains and two identical light chains; disulfide-linked. Monomeric or polymeric.

It localises to the secreted. It is found in the cell membrane. In terms of biological role, immunoglobulins, also known as antibodies, are membrane-bound or secreted glycoproteins produced by B lymphocytes. In the recognition phase of humoral immunity, the membrane-bound immunoglobulins serve as receptors which, upon binding of a specific antigen, trigger the clonal expansion and differentiation of B lymphocytes into immunoglobulins-secreting plasma cells. Secreted immunoglobulins mediate the effector phase of humoral immunity, which results in the elimination of bound antigens. The antigen binding site is formed by the variable domain of one heavy chain, together with that of its associated light chain. Thus, each immunoglobulin has two antigen binding sites with remarkable affinity for a particular antigen. The variable domains are assembled by a process called V-(D)-J rearrangement and can then be subjected to somatic hypermutations which, after exposure to antigen and selection, allow affinity maturation for a particular antigen. Ig alpha is the major immunoglobulin class in body secretions. This chain is Immunoglobulin alpha-2 heavy chain, found in Homo sapiens (Human).